We begin with the raw amino-acid sequence, 322 residues long: Aspartate carbamoyltransferase catalytic subunit (322 aa).

Carbamoyl phosphate is bound by residues Arg65 and Thr66. Residue Lys93 participates in L-aspartate binding. Positions 115, 143, and 146 each coordinate carbamoyl phosphate. L-aspartate contacts are provided by Arg176 and Arg230. Residues Gly271 and Pro272 each contribute to the carbamoyl phosphate site.

Belongs to the aspartate/ornithine carbamoyltransferase superfamily. ATCase family. As to quaternary structure, heterododecamer (2C3:3R2) of six catalytic PyrB chains organized as two trimers (C3), and six regulatory PyrI chains organized as three dimers (R2).

It catalyses the reaction carbamoyl phosphate + L-aspartate = N-carbamoyl-L-aspartate + phosphate + H(+). The protein operates within pyrimidine metabolism; UMP biosynthesis via de novo pathway; (S)-dihydroorotate from bicarbonate: step 2/3. Catalyzes the condensation of carbamoyl phosphate and aspartate to form carbamoyl aspartate and inorganic phosphate, the committed step in the de novo pyrimidine nucleotide biosynthesis pathway. The polypeptide is Aspartate carbamoyltransferase catalytic subunit (Brucella canis (strain ATCC 23365 / NCTC 10854 / RM-666)).